Consider the following 130-residue polypeptide: Astrocytic phosphoprotein PEA-15 (130 aa).

The DED domain maps to 3–81 (EYGTLLQDLT…RPDLLTMVVD (79 aa)). Residues S61, S90, S104, and S116 each carry the phosphoserine modification. The microtubule-binding stretch occupies residues 98–107 (KLTRIPSAKK). The tract at residues 122-129 (KLAPPPKK) is microtubule-binding.

Binds RPS6KA3, MAPK3 and MAPK1. Transient interaction with PLD1 and PLD2. Interacts with CASP8 and FADD. Phosphorylated by protein kinase C and calcium-calmodulin-dependent protein kinase. These phosphorylation events are modulated by neurotransmitters or hormones. In terms of tissue distribution, ubiquitously expressed. Most abundant in tissues such as heart, brain, muscle and adipose tissue which utilize glucose as an energy source. Lower expression in glucose-producing tissues. Higher levels of expression are found in tissues from individuals with type 2 diabetes than in controls.

It localises to the cytoplasm. Blocks Ras-mediated inhibition of integrin activation and modulates the ERK MAP kinase cascade. Inhibits RPS6KA3 activities by retaining it in the cytoplasm. Inhibits both TNFRSF6- and TNFRSF1A-mediated CASP8 activity and apoptosis. Regulates glucose transport by controlling both the content of SLC2A1 glucose transporters on the plasma membrane and the insulin-dependent trafficking of SLC2A4 from the cell interior to the surface. The protein is Astrocytic phosphoprotein PEA-15 (PEA15) of Homo sapiens (Human).